The primary structure comprises 124 residues: UPF0357 protein C1687.07 (124 aa).

Positions 1–24 (MASFHIIVSYVTVVLAIIIAITFA) are cleaved as a signal peptide.

Belongs to the UPF0357 family.

This chain is UPF0357 protein C1687.07, found in Schizosaccharomyces pombe (strain 972 / ATCC 24843) (Fission yeast).